A 347-amino-acid chain; its full sequence is Trace amine-associated receptor 4 (347 aa).

The Extracellular segment spans residues 1 to 37 (MNTPDPWSSPEVQFCFAAANSSCPRKARPALVVCAMY). N-linked (GlcNAc...) asparagine glycosylation occurs at Asn20. Intrachain disulfides connect Cys23/Cys187 and Cys106/Cys191. The chain crosses the membrane as a helical span at residues 38–58 (LIMIGAIVMTMLGNMAVIISI). The Cytoplasmic portion of the chain corresponds to 59–69 (AHFKQLHSPTN). A helical transmembrane segment spans residues 70–90 (FLILSMATTDFLLSCVVMPFS). Topologically, residues 91–110 (MIRSIESCWYFGDLFCKVHS) are extracellular. The chain crosses the membrane as a helical span at residues 111-129 (CCDIMLCTTSIFHLCFISV). Residues 130–149 (DRHYAVCDPLHYVTQITTRV) are Cytoplasmic-facing. A helical transmembrane segment spans residues 150 to 170 (VGVFLLISWSVPIFFAFGLVF). Topologically, residues 171-197 (SELNLIGAEDFVAAIDCTGLCVLIFNK) are extracellular. Residues 175 to 188 (LIGAEDFVAAIDCT) form an extracellular Loop 2 (ECL2) region. Residues 198-218 (LWGVLASFIAFFLPGTVMVGI) traverse the membrane as a helical segment. The Cytoplasmic segment spans residues 219-260 (YIHIFTVAQKHARQIGTGPRTKQALSESKMKATSKKESKATK). Residues 261-281 (TLSIVMGVFVLCWLPFFVLTI) traverse the membrane as a helical segment. Residues 282 to 296 (TDPFIDFTTPEDLYN) are Extracellular-facing. A helical membrane pass occupies residues 297-317 (VFLWLGYFNSTFNPIIYGMFY). At 318 to 347 (PWFRKALRMIVTGTIFRSDSSTSSLHPAHP) the chain is on the cytoplasmic side.

This sequence belongs to the G-protein coupled receptor 1 family. As to expression, specifically expressed in neurons of the olfactory epithelium, to discrete glomeruli predominantly localized to a confined bulb region. Present in the dorsal area of the main olfactory epithelium.

The protein resides in the cell membrane. Its function is as follows. Olfactory receptor specific for 2-phenylethylamine, a trace amine present at high concentration in the urine of carnivore species, playing a key role in fear and avoidance responses. 2-phenylethylamine acts as a kairomone in the chemical detection of carnivore odor and triggers fear in mice. This receptor is probably mediated by the G(s)-class of G-proteins which activate adenylate cyclase. This is Trace amine-associated receptor 4 from Mus musculus (Mouse).